Here is a 347-residue protein sequence, read N- to C-terminus: Protein-glutamate methylesterase/protein-glutamine glutaminase (347 aa).

One can recognise a Response regulatory domain in the interval 3–119 (EALVVDDSHF…STELSGHSEE (117 aa)). The residue at position 53 (Asp53) is a 4-aspartylphosphate. The interval 132–154 (PTAGHDVEMEPASPPDATTSEYA) is disordered. In terms of domain architecture, CheB-type methylesterase spans 152–346 (EYADNPTLLI…EAIADSIRRT (195 aa)). Residues Ser164, His191, and Asp288 contribute to the active site.

The protein belongs to the CheB family. In terms of processing, phosphorylated by CheA. Phosphorylation of the N-terminal regulatory domain activates the methylesterase activity.

Its subcellular location is the cytoplasm. The enzyme catalyses [protein]-L-glutamate 5-O-methyl ester + H2O = L-glutamyl-[protein] + methanol + H(+). It catalyses the reaction L-glutaminyl-[protein] + H2O = L-glutamyl-[protein] + NH4(+). Its function is as follows. Involved in the modulation of the chemotaxis system; catalyzes the demethylation of specific methylglutamate residues introduced into the Htr transducer proteins (methyl-accepting chemotaxis proteins) by CheR. Also required for Htr deamidations, at least at a specific glutamine-glutamate pair in HTR-II and a specific aspartate-glutamine pair in Htr4. This is Protein-glutamate methylesterase/protein-glutamine glutaminase from Halobacterium salinarum (strain ATCC 29341 / DSM 671 / R1).